A 199-amino-acid chain; its full sequence is Thymidine kinase (199 aa).

ATP is bound by residues 9–16 (GAMSSGKT) and 93–96 (DEAQ). Glu94 serves as the catalytic Proton acceptor. Positions 151, 154, 188, and 191 each coordinate Zn(2+).

Belongs to the thymidine kinase family. In terms of assembly, homotetramer.

It is found in the cytoplasm. The catalysed reaction is thymidine + ATP = dTMP + ADP + H(+). This is Thymidine kinase from Lactobacillus acidophilus (strain ATCC 700396 / NCK56 / N2 / NCFM).